Reading from the N-terminus, the 783-residue chain is MRWPCSSRFRGLWPEAAPWAVLLALGVPGWVLAVSATVAAVVPEQHVSSAGQAPLDWLLTDRGPFHRAQEYADFMERYRQGFTTRYRIYREFARWKVNNLALERKDFFSLPLPLAPEFVRNIRLLGRRPNLQQVTENLIKKYGTHFLLSATLGGEESLTIFVDKRKLSRKSETLGGVPVVGGTGNSSAVSLETLHQLAASYFIDRESTLRRLHHIQIATGAIKVTETRTGPLGCSNYDNLDSVSSVLVQSPENKVQLLGLQVLLPEHLRERFVAAALSYITCSSEGELVCRENDCWCKCSPTFPECNCPDADIQAMEDSLLQIQDSWATHNRQFEESEEFQTLLKRLPSDRFLNSTAISQYWTMDANLQHRYQQLGASLKVLLKKMHRIVRRLFNLCKRCHRQPRFRLPKERSLSFWWNRIQSLLYCGESTFPGTFLEQSHSCTCPYDQSSCQGPIPCALGEGPACAHCASDNTTRCGSCNPGYVLAQGLCRPEVAESLENFLGLETDLQDLELKYLLQKRDSRIEVHSIFISNDMRLGSWFDPSWRKRMLLTLKSNKYKPGLVHVMLALSLQICLTKNSTLEPVMAIYVNPFGGSHSESWFMPVNEGSFPDWERTNVDAAAQCQNWTITLGNRWKTFFETVHVYLRSRIKSLDDSSNETIYYEPLEMTDPSKNLGYMKINTLQVFGYSLPFDPDAIRDLILQLDYPYTQGSQDSALLQLIELRDRVNQLSPPGKVRLDLFSCLLRHRLKLANNEVGRIQSSLRAFNSKLPNPVEYETGKLCS.

The first 33 residues, 1 to 33, serve as a signal peptide directing secretion; sequence MRWPCSSRFRGLWPEAAPWAVLLALGVPGWVLA. Residues 85-281 form the MACPF domain; sequence RYRIYREFAR…FVAAALSYIT (197 aa). Residues Asn185, Asn354, Asn473, Asn579, Asn626, and Asn658 are each glycosylated (N-linked (GlcNAc...) asparagine).

This sequence belongs to the BRINP family. In terms of tissue distribution, expressed in olfactory bulb, cerebellum and neuronal layers in hippocampus.

It is found in the secreted. In terms of biological role, inhibits neuronal cell proliferation by negative regulation of the cell cycle transition. This is BMP/retinoic acid-inducible neural-specific protein 2 (Brinp2) from Rattus norvegicus (Rat).